The sequence spans 1149 residues: DNA polymerase (1149 aa).

The segment covering 1 to 28 (MSLVQSHGTSGLFTEPPNSINQQESSGP) has biased composition (polar residues). Positions 1–49 (MSLVQSHGTSGLFTEPPNSINQQESSGPSLPAQDATQASASSARAGATP) are disordered. Positions 31–49 (PAQDATQASASSARAGATP) are enriched in low complexity.

This sequence belongs to the DNA polymerase type-B family. In terms of assembly, heterodimer with the terminal protein; this heterodimer binds to bp 9 to 18 of the genome. Forms a complex with viral pTP, DBP and hosts NFIA and POU2F1/OCT1 for initiation of replication.

Its subcellular location is the host nucleus. It catalyses the reaction DNA(n) + a 2'-deoxyribonucleoside 5'-triphosphate = DNA(n+1) + diphosphate. Its function is as follows. Eukaryotic-type DNA polymerase involved in viral genomic replication. DNA synthesis is protein primed, and acts in a strand displacement replication. Assembles in complex with viral pTP, DBP, host NFIA and host POU2F1/OCT1 on viral origin of replication. The polymerase covalently transfers dCMP onto pTP, thereby initiating complementary strand synthesis. The polypeptide is DNA polymerase (Canine adenovirus serotype 1 (strain CLL) (CAdV-1)).